The following is a 555-amino-acid chain: 2-succinyl-5-enolpyruvyl-6-hydroxy-3-cyclohexene-1-carboxylate synthase (555 aa).

The protein belongs to the TPP enzyme family. MenD subfamily. As to quaternary structure, homodimer. It depends on Mg(2+) as a cofactor. Mn(2+) is required as a cofactor. The cofactor is thiamine diphosphate.

The enzyme catalyses isochorismate + 2-oxoglutarate + H(+) = 5-enolpyruvoyl-6-hydroxy-2-succinyl-cyclohex-3-ene-1-carboxylate + CO2. The protein operates within quinol/quinone metabolism; 1,4-dihydroxy-2-naphthoate biosynthesis; 1,4-dihydroxy-2-naphthoate from chorismate: step 2/7. It functions in the pathway quinol/quinone metabolism; menaquinone biosynthesis. In terms of biological role, catalyzes the thiamine diphosphate-dependent decarboxylation of 2-oxoglutarate and the subsequent addition of the resulting succinic semialdehyde-thiamine pyrophosphate anion to isochorismate to yield 2-succinyl-5-enolpyruvyl-6-hydroxy-3-cyclohexene-1-carboxylate (SEPHCHC). This Cronobacter sakazakii (strain ATCC BAA-894) (Enterobacter sakazakii) protein is 2-succinyl-5-enolpyruvyl-6-hydroxy-3-cyclohexene-1-carboxylate synthase.